A 346-amino-acid polypeptide reads, in one-letter code: Phenylalanine--tRNA ligase alpha subunit (346 aa).

Glu262 provides a ligand contact to Mg(2+).

It belongs to the class-II aminoacyl-tRNA synthetase family. Phe-tRNA synthetase alpha subunit type 1 subfamily. In terms of assembly, tetramer of two alpha and two beta subunits. Mg(2+) is required as a cofactor.

The protein localises to the cytoplasm. It carries out the reaction tRNA(Phe) + L-phenylalanine + ATP = L-phenylalanyl-tRNA(Phe) + AMP + diphosphate + H(+). This chain is Phenylalanine--tRNA ligase alpha subunit, found in Ehrlichia chaffeensis (strain ATCC CRL-10679 / Arkansas).